The following is a 749-amino-acid chain: Poly(U)-binding-splicing factor rnp-6 (749 aa).

RRM domains lie at 102-176 and 207-285; these read SRIY…LKVN and FRVY…KCVT. Disordered stretches follow at residues 323–388 and 457–480; these read AGSS…PDVV and IEEEEEARTERVKLSTSQRKKMKR. The span at 330 to 354 shows a compositional bias: low complexity; the sequence is PSESGGSRAASPAPRAQSPATPSSS. The 82-residue stretch at 658 to 739 folds into the RRM 3; atypical domain; sequence NVIVLRNMVT…NTVKAEAYDQ (82 aa).

It belongs to the RRM half pint family.

The protein localises to the nucleus. Its function is as follows. DNA- and RNA-binding protein, involved in several nuclear processes such as pre-mRNA splicing, apoptosis and transcription regulation. Ensures the correct splicing of genes involved in immunity to promote longevity in response to infection by pathogenic bacteria such as S.aureus. The polypeptide is Poly(U)-binding-splicing factor rnp-6 (Caenorhabditis elegans).